The primary structure comprises 459 residues: Transcriptional coactivator YAP1-A (459 aa).

Residues 1-13 (MEPGSQQQPSAPA) are compositionally biased toward low complexity. The segment at 1-22 (MEPGSQQQPSAPAQQPPPVGHQ) is disordered. 4 positions are modified to phosphoserine; by LATS1 and LATS2: S30, S80, S98, and S134. Disordered stretches follow at residues 65–99 (FKQPQPEAKSHSRQASTDGGSAGALTPQHVRAHSS) and 126–145 (SAPHLRQSSYEIPDDVPLPP). WW domains are found at residues 141–174 (VPLPPGWEMAKTPSGQRYFLNHIDQTTTWQDPRK) and 199–232 (GPLPDGWEQALTPEGEAYFINHKNKSTSWLDPRL). Residues 246–268 (NAPVKAPPALPPPSPQTGVLGSG) form a disordered region. Pro residues predominate over residues 250–260 (KAPPALPPPSP). Positions 261–459 (QTGVLGSGGN…LDKESFLTWL (199 aa)) are transactivation domain. The stretch at 269 to 297 (GNQQMRLQQLQMEKERLRLKHQELLRQVR) forms a coiled coil. A disordered region spans residues 344–363 (GTYHSRDESTESGLSMSSYS). Positions 354 to 363 (ESGLSMSSYS) are enriched in polar residues.

It belongs to the YAP1 family. As to quaternary structure, interacts with tead1. Post-translationally, phosphorylated by lats1 and lats2; leading to cytoplasmic translocation and inactivation.

The protein localises to the cytoplasm. It localises to the nucleus. The protein resides in the cell junction. It is found in the tight junction. Its subcellular location is the cell membrane. In terms of biological role, transcriptional regulator which can act both as a coactivator and a corepressor and is the critical downstream regulatory target in the Hippo signaling pathway that plays a pivotal role in organ size control and tumor suppression by restricting proliferation and promoting apoptosis. Plays a key role in tissue tension and 3D tissue shape by regulating cortical actomyosin network formation. Required for expansion of the neural plate and neural plate border zone progenitor pools. Acts as a direct regulator of pax3 expression via interaction with tead1. The protein is Transcriptional coactivator YAP1-A of Xenopus laevis (African clawed frog).